The chain runs to 356 residues: Photosystem II protein D1 (356 aa).

Helical transmembrane passes span 29–46 (YVGW…TATT), 118–133 (HFLI…QWEL), and 142–156 (WICV…AATA). His118 is a chlorophyll a binding site. Position 126 (Tyr126) interacts with pheophytin a. [CaMn4O5] cluster is bound by residues Asp170 and Glu189. Residues 197–218 (FHMLGVAGVFGGSLFSAMHGSL) traverse the membrane as a helical segment. His198 contributes to the chlorophyll a binding site. A quinone contacts are provided by residues His215 and 264 to 265 (SF). Residue His215 coordinates Fe cation. His272 serves as a coordination point for Fe cation. The chain crosses the membrane as a helical span at residues 274–288 (FLGAWPVIGIWFTAM). [CaMn4O5] cluster contacts are provided by His332, Glu333, Asp342, and Ala344. Positions 345 to 356 (SAEPVSAPVING) are excised as a propeptide.

It belongs to the reaction center PufL/M/PsbA/D family. As to quaternary structure, PSII is composed of 1 copy each of membrane proteins PsbA, PsbB, PsbC, PsbD, PsbE, PsbF, PsbH, PsbI, PsbJ, PsbK, PsbL, PsbM, PsbT, PsbX, PsbY, PsbZ, Psb30/Ycf12, peripheral proteins PsbO, CyanoQ (PsbQ), PsbU, PsbV and a large number of cofactors. It forms dimeric complexes. The D1/D2 heterodimer binds P680, chlorophylls that are the primary electron donor of PSII, and subsequent electron acceptors. It shares a non-heme iron and each subunit binds pheophytin, quinone, additional chlorophylls, carotenoids and lipids. D1 provides most of the ligands for the Mn4-Ca-O5 cluster of the oxygen-evolving complex (OEC). There is also a Cl(-1) ion associated with D1 and D2, which is required for oxygen evolution. The PSII complex binds additional chlorophylls, carotenoids and specific lipids. is required as a cofactor. Tyr-161 forms a radical intermediate that is referred to as redox-active TyrZ, YZ or Y-Z. Post-translationally, C-terminally processed by CtpA; processing is essential to allow assembly of the oxygen-evolving complex and thus photosynthetic growth.

The protein localises to the cellular thylakoid membrane. The catalysed reaction is 2 a plastoquinone + 4 hnu + 2 H2O = 2 a plastoquinol + O2. In terms of biological role, photosystem II (PSII) is a light-driven water:plastoquinone oxidoreductase that uses light energy to abstract electrons from H(2)O, generating O(2) and a proton gradient subsequently used for ATP formation. It consists of a core antenna complex that captures photons, and an electron transfer chain that converts photonic excitation into a charge separation. The D1/D2 (PsbA/PsbD) reaction center heterodimer binds P680, the primary electron donor of PSII as well as several subsequent electron acceptors. This is Photosystem II protein D1 from Crocosphaera subtropica (strain ATCC 51142 / BH68) (Cyanothece sp. (strain ATCC 51142)).